A 792-amino-acid chain; its full sequence is Phenylalanine--tRNA ligase beta subunit (792 aa).

In terms of domain architecture, tRNA-binding spans 39-147 (GESLGQVVVA…DDAPVGQALA (109 aa)). Residues 400–475 (PQPARILLRR…RIHGYDRVPT (76 aa)) form the B5 domain. Mg(2+) is bound by residues Asp-453, Asp-459, Glu-462, and Asp-463. In terms of domain architecture, FDX-ACB spans 698 to 791 (SRFPSVRRDL…IEREHRARIR (94 aa)).

Belongs to the phenylalanyl-tRNA synthetase beta subunit family. Type 1 subfamily. Tetramer of two alpha and two beta subunits. The cofactor is Mg(2+).

The protein localises to the cytoplasm. The enzyme catalyses tRNA(Phe) + L-phenylalanine + ATP = L-phenylalanyl-tRNA(Phe) + AMP + diphosphate + H(+). This chain is Phenylalanine--tRNA ligase beta subunit, found in Xanthomonas oryzae pv. oryzae (strain KACC10331 / KXO85).